The sequence spans 68 residues: uncharacterized protein (68 aa).

Positions 1 to 28 (MNKEQSADDPSVDLIRVKNMLNSTISMS) are cleaved as a signal peptide.

This is an uncharacterized protein from Escherichia coli (strain K12).